We begin with the raw amino-acid sequence, 420 residues long: MGIFEEAKKYIVGGVNSPVRAFKSVGGEPPFIEKGEGAYIYDINGNKYLDYIQSWGPLIFGHCDKDIEKAICNAVSKGVSFGAPTTVEVELAKEVLDLFPHLDLIRFVNSGTEATMSAIRVARGVSGKDDIIKFEGCYHGHSDSLLVSAGSGAATFGTPSSPGVPADFTKHTLLAKYNDIESVKKCFENGNVGCVIIEPIAGNMSLVPAEKEFLTELRELCTKNGAILIFDEVMSGFRAGLRGSYDVYGIEADIVTFGKVIGGGMPVGAFAGKKVIMEQLSPEGPIYQAGTLSGNPVAMSAGLAMLKKLKSNPELYKDLESKAKKLMKGFEEISKENGIDIQTNVVGSMFGFFFNSKKPKNFDDVNESDTKRYAKFHSEMLKRGFYFAPSAYETGFICTVMNDTDIDATLNAYKEIAPSL.

Residue K259 is modified to N6-(pyridoxal phosphate)lysine.

Belongs to the class-III pyridoxal-phosphate-dependent aminotransferase family. HemL subfamily. Homodimer. It depends on pyridoxal 5'-phosphate as a cofactor.

It localises to the cytoplasm. The catalysed reaction is (S)-4-amino-5-oxopentanoate = 5-aminolevulinate. It participates in porphyrin-containing compound metabolism; protoporphyrin-IX biosynthesis; 5-aminolevulinate from L-glutamyl-tRNA(Glu): step 2/2. The sequence is that of Glutamate-1-semialdehyde 2,1-aminomutase from Nautilia profundicola (strain ATCC BAA-1463 / DSM 18972 / AmH).